Reading from the N-terminus, the 178-residue chain is uncharacterized protein (178 aa).

Belongs to the IIV-6 136R family.

This is an uncharacterized protein from Invertebrate iridescent virus 6 (IIV-6).